Reading from the N-terminus, the 316-residue chain is Transaldolase (316 aa).

Residue Lys-131 is the Schiff-base intermediate with substrate of the active site.

Belongs to the transaldolase family. Type 1 subfamily. In terms of assembly, homodimer.

The protein localises to the cytoplasm. It catalyses the reaction D-sedoheptulose 7-phosphate + D-glyceraldehyde 3-phosphate = D-erythrose 4-phosphate + beta-D-fructose 6-phosphate. The protein operates within carbohydrate degradation; pentose phosphate pathway; D-glyceraldehyde 3-phosphate and beta-D-fructose 6-phosphate from D-ribose 5-phosphate and D-xylulose 5-phosphate (non-oxidative stage): step 2/3. Functionally, transaldolase is important for the balance of metabolites in the pentose-phosphate pathway. The protein is Transaldolase of Chromohalobacter salexigens (strain ATCC BAA-138 / DSM 3043 / CIP 106854 / NCIMB 13768 / 1H11).